Consider the following 204-residue polypeptide: MEEYHLKCIVTGPPFVGKSSLLLQFCEKEFSFEMDTTIGVEFQTRSILIDSSKIKLEIWDTAGQESFRSITTNYYRGAHIALLCYDITKRQSFQYLSGWMDEVRQMSSPNIVIALIGNKCDCKDKRVITTEEGAKNAKENDILFFETSAKDYESVESVFDGVSKKVLSLIKQGTLTVVNKKPQSIQLGAPTQETPKKPKSECCK.

A GTP-binding site is contributed by 12–19 (GPPFVGKS). Positions 34–42 (MDTTIGVEF) match the Effector region motif. GTP contacts are provided by residues 60 to 64 (DTAGQ) and 118 to 121 (NKCD). S-geranylgeranyl cysteine attachment occurs at residues Cys-202 and Cys-203.

This sequence belongs to the small GTPase superfamily. Rab family.

The protein localises to the cell membrane. The polypeptide is Ras-related protein RabQ (rabQ) (Dictyostelium discoideum (Social amoeba)).